Consider the following 902-residue polypeptide: HTH-type transcriptional regulator MalT (902 aa).

39-46 (SPAGYGKT) lines the ATP pocket. The HTH luxR-type domain maps to 832-897 (ELVRTSPLTQ…EAVQTAEQLL (66 aa)). The H-T-H motif DNA-binding region spans 856-875 (NEQIAHELDVAGTTIKTHIR).

This sequence belongs to the MalT family. Monomer in solution. Oligomerizes to an active state in the presence of the positive effectors ATP and maltotriose.

Its activity is regulated as follows. Activated by ATP and maltotriose, which are both required for DNA binding. Its function is as follows. Positively regulates the transcription of the maltose regulon whose gene products are responsible for uptake and catabolism of malto-oligosaccharides. Specifically binds to the promoter region of its target genes, recognizing a short DNA motif called the MalT box. The protein is HTH-type transcriptional regulator MalT of Vibrio cholerae serotype O1 (strain ATCC 39315 / El Tor Inaba N16961).